The sequence spans 319 residues: Glycine--tRNA ligase alpha subunit (319 aa).

The protein belongs to the class-II aminoacyl-tRNA synthetase family. Tetramer of two alpha and two beta subunits.

The protein resides in the cytoplasm. The catalysed reaction is tRNA(Gly) + glycine + ATP = glycyl-tRNA(Gly) + AMP + diphosphate. The chain is Glycine--tRNA ligase alpha subunit from Oenococcus oeni (strain ATCC BAA-331 / PSU-1).